Reading from the N-terminus, the 152-residue chain is UPF0178 protein Plav_1521 (152 aa).

The interval 114–152 (LRETGQSKGGGPAFSKEDRSRFLRSLEDTVQAIRRRPPP) is disordered. Residues 128–140 (SKEDRSRFLRSLE) show a composition bias toward basic and acidic residues.

The protein belongs to the UPF0178 family.

In Parvibaculum lavamentivorans (strain DS-1 / DSM 13023 / NCIMB 13966), this protein is UPF0178 protein Plav_1521.